A 567-amino-acid chain; its full sequence is ETHYLENE INSENSITIVE 3-like 3 protein (567 aa).

The stretch at 24–44 (NVAEIDVSDEEIDADDLERRM) forms a coiled coil. 2 disordered regions span residues 55–81 (KERQKAGSQGAQTKETPKKISDQAQRK) and 286–393 (IQQP…RNIL). The segment covering 69-79 (ETPKKISDQAQ) has biased composition (basic and acidic residues). A DNA-binding region spans residues 162-288 (SQFVLQDLQD…LNQEESLIQQ (127 aa)). Residues 286-299 (IQQPSSDNGNSNVT) show a composition bias toward polar residues. The span at 300-312 (ETHRRGNNADRRK) shows a compositional bias: basic and acidic residues. The segment covering 363–372 (KHRRRKRPRI) has biased composition (basic residues).

This sequence belongs to the EIN3 family. As to quaternary structure, interacts with MYB72.

The protein localises to the nucleus. Its function is as follows. Probable transcription factor that may be involved in the ethylene response pathway. The polypeptide is ETHYLENE INSENSITIVE 3-like 3 protein (EIL3) (Arabidopsis thaliana (Mouse-ear cress)).